Here is a 236-residue protein sequence, read N- to C-terminus: Mitochondrial-abundant heat soluble protein (236 aa).

The transit peptide at Met-1–Gly-73 directs the protein to the mitochondrion. Disordered stretches follow at residues Arg-102–Ala-135 and Arg-165–Ala-209. 2 stretches are compositionally biased toward polar residues: residues Ser-105–Gln-126 and Ala-192–Val-202. The MAHS motif motif lies at Gln-126 to Asn-143.

The protein localises to the mitochondrion. Mitochondrial heat soluble protein acting as a molecular shield in water-deficient condition. This is Mitochondrial-abundant heat soluble protein from Ramazzottius varieornatus (Water bear).